Reading from the N-terminus, the 130-residue chain is Small ribosomal subunit protein uS12c (130 aa).

This sequence belongs to the universal ribosomal protein uS12 family. In terms of assembly, part of the 30S ribosomal subunit.

It is found in the plastid. It localises to the chloroplast. In terms of biological role, with S4 and S5 plays an important role in translational accuracy. Located at the interface of the 30S and 50S subunits. The protein is Small ribosomal subunit protein uS12c (rps12) of Tetradesmus obliquus (Green alga).